Reading from the N-terminus, the 316-residue chain is N-acetylmuramic acid 6-phosphate etherase (316 aa).

The tract at residues 1-23 (MAGFDPTLQPSDDRGHLLTEQSN) is disordered. The SIS domain occupies 66–229 (ISKRLSSGGR…STTVMVRLGK (164 aa)). Glu94 acts as the Proton donor in catalysis. Glu125 is an active-site residue.

The protein belongs to the GCKR-like family. MurNAc-6-P etherase subfamily. As to quaternary structure, homodimer.

The catalysed reaction is N-acetyl-D-muramate 6-phosphate + H2O = N-acetyl-D-glucosamine 6-phosphate + (R)-lactate. Its pathway is amino-sugar metabolism; N-acetylmuramate degradation. Functionally, specifically catalyzes the cleavage of the D-lactyl ether substituent of MurNAc 6-phosphate, producing GlcNAc 6-phosphate and D-lactate. The chain is N-acetylmuramic acid 6-phosphate etherase from Synechococcus sp. (strain CC9902).